The sequence spans 1036 residues: Integrin alpha-9 (1036 aa).

A signal peptide spans 1 to 28 (MGGPAAARTGAGGLRALLLALVAAGVPA). The Extracellular portion of the chain corresponds to 29-981 (GAYNLDAQRP…NLEPRGYVVG (953 aa)). FG-GAP repeat units lie at residues 36-97 (QRPV…PDRR), 109-175 (RGAP…AKGK), 183-233 (EYKK…NTYF), 234-290 (KLND…SGTL), 291-350 (IKIF…GALE), 352-409 (QLTL…GIVP), and 412-475 (SMKL…LPGS). Intrachain disulfides connect Cys88-Cys98, Cys143-Cys163, and Cys180-Cys195. Residue Asn226 is glycosylated (N-linked (GlcNAc...) asparagine). Residues Asp313, Asn315, Asp317, Asp321, Asp374, Asp376, Asp378, Asp382, Asp436, Asp438, Asn440, and Asp444 each contribute to the Ca(2+) site. An intrachain disulfide couples Cys483 to Cys492. Asn494 and Asn515 each carry an N-linked (GlcNAc...) asparagine glycan. Disulfide bonds link Cys498/Cys556, Cys621/Cys626, and Cys697/Cys707. Asn808 carries N-linked (GlcNAc...) asparagine glycosylation. Intrachain disulfides connect Cys856–Cys892 and Cys899–Cys904. A helical transmembrane segment spans residues 982–1002 (WIIAISLLVGILIFLLLAVLL). Over 1003 to 1036 (WKMGFFRRRYKEIIEAEKNRKENEDGWDWVQKNQ) the chain is Cytoplasmic. Positions 1006-1010 (GFFRR) match the GFFKR motif motif.

This sequence belongs to the integrin alpha chain family. As to quaternary structure, heterodimer of an alpha and a beta subunit. Alpha-9 (ITGA9) associates with beta-1 (ITGB1). Integrin ITGA9:ITGB1 interacts with FBLN5 (via N-terminus). Integrin ITGA9:ITGB1 interacts with SPP1/OPN (via N-terminus). Integrin ITGA9:ITGB1 interacts with TNC/TNFN3 (via the 3rd Fibronectin type-III domain). Integrin ITGA9:ITGB1 interacts with SVEP1/polydom (via Sushi domain 21); thereby inhibits Ca(2+) intracellular signaling and as a result represses vasocontraction. As to expression, expressed in the media layer of the arterial wall (at protein level). Expressed in the airway epithelium, skeletal muscle, basal keratincytes, the basal epithelium of the cornea, hepatocytes, giant cells in the spleen and smooth muscle of the stomach, duodenum and veins (at protein level).

It localises to the membrane. Integrin alpha-9/beta-1 (ITGA9:ITGB1) is a receptor for VCAM1, cytotactin and osteopontin. It recognizes the sequence A-E-I-D-G-I-E-L in cytotactin. ITGA9:ITGB1 may play a crucial role in SVEP1/polydom-mediated myoblast cell adhesion. Integrin ITGA9:ITGB1 represses PRKCA-mediated L-type voltage-gated channel Ca(2+) influx and ROCK-mediated calcium sensitivity in vascular smooth muscle cells via its interaction with SVEP1, thereby inhibiting vasocontraction. The polypeptide is Integrin alpha-9 (Mus musculus (Mouse)).